The sequence spans 129 residues: Flagellar assembly factor FliW (129 aa).

It belongs to the FliW family. Interacts with flagellins FlaA and FlaB but not with FlaC; recognizes glycosylated and non-glycosylated FlaA equally. Interacts with CsrA. May form a 3-way complex of flagellin, FliS and FliW simultaneously in which FliS and FliW do not directly interact.

The protein localises to the cytoplasm. Functionally, acts as an anti-CsrA protein, binds CsrA and prevents it from repressing translation of its target genes, one of which is flagellin. Binds to flagellin and participates in the assembly of the flagellum. In terms of biological role, overexpression leads to increased levels of FlaA and FlaB, but levels of FlaC remain stable. Involved in post-transcriptional regulation of flagellin biosynthesis. This chain is Flagellar assembly factor FliW, found in Campylobacter jejuni subsp. jejuni serotype O:6 (strain 81116 / NCTC 11828).